Consider the following 95-residue polypeptide: Integration host factor subunit beta (95 aa).

The interval 52–95 (SLHHRPPRVGRNPKTGESVHLPSRRVPHFKPGKELRDRVNSIKD) is disordered. A compositionally biased stretch (basic and acidic residues) spans 82 to 95 (PGKELRDRVNSIKD).

This sequence belongs to the bacterial histone-like protein family. In terms of assembly, heterodimer of an alpha and a beta chain.

Functionally, this protein is one of the two subunits of integration host factor, a specific DNA-binding protein that functions in genetic recombination as well as in transcriptional and translational control. The polypeptide is Integration host factor subunit beta (Methylococcus capsulatus (strain ATCC 33009 / NCIMB 11132 / Bath)).